Consider the following 585-residue polypeptide: DNA mismatch repair protein MutL (585 aa).

It belongs to the DNA mismatch repair MutL/HexB family.

This protein is involved in the repair of mismatches in DNA. It is required for dam-dependent methyl-directed DNA mismatch repair. May act as a 'molecular matchmaker', a protein that promotes the formation of a stable complex between two or more DNA-binding proteins in an ATP-dependent manner without itself being part of a final effector complex. The polypeptide is DNA mismatch repair protein MutL (Methanoculleus marisnigri (strain ATCC 35101 / DSM 1498 / JR1)).